Reading from the N-terminus, the 96-residue chain is Co-chaperonin GroES (96 aa).

The protein belongs to the GroES chaperonin family. In terms of assembly, heptamer of 7 subunits arranged in a ring. Interacts with the chaperonin GroEL.

The protein localises to the cytoplasm. Together with the chaperonin GroEL, plays an essential role in assisting protein folding. The GroEL-GroES system forms a nano-cage that allows encapsulation of the non-native substrate proteins and provides a physical environment optimized to promote and accelerate protein folding. GroES binds to the apical surface of the GroEL ring, thereby capping the opening of the GroEL channel. This chain is Co-chaperonin GroES, found in Holospora obtusa.